Consider the following 449-residue polypeptide: Adenylosuccinate synthetase (449 aa).

GTP-binding positions include 37–43 (GDEGKGK) and 65–67 (GHT). The active-site Proton acceptor is the aspartate 38. Mg(2+) contacts are provided by aspartate 38 and glycine 65. IMP-binding positions include 38-41 (DEGK), 63-66 (NAGH), threonine 155, arginine 169, asparagine 247, threonine 262, and arginine 326. The Proton donor role is filled by histidine 66. 322 to 328 (VTTKRKR) lines the substrate pocket. GTP-binding positions include arginine 328, 354–356 (KLD), and 437–439 (GVG).

The protein belongs to the adenylosuccinate synthetase family. As to quaternary structure, homodimer. The cofactor is Mg(2+).

The protein resides in the cytoplasm. It catalyses the reaction IMP + L-aspartate + GTP = N(6)-(1,2-dicarboxyethyl)-AMP + GDP + phosphate + 2 H(+). It functions in the pathway purine metabolism; AMP biosynthesis via de novo pathway; AMP from IMP: step 1/2. Plays an important role in the de novo pathway and in the salvage pathway of purine nucleotide biosynthesis. Catalyzes the first committed step in the biosynthesis of AMP from IMP. The protein is Adenylosuccinate synthetase of Drosophila willistoni (Fruit fly).